Here is a 416-residue protein sequence, read N- to C-terminus: Gamma-glutamyl phosphate reductase (416 aa).

This sequence belongs to the gamma-glutamyl phosphate reductase family.

It localises to the cytoplasm. The enzyme catalyses L-glutamate 5-semialdehyde + phosphate + NADP(+) = L-glutamyl 5-phosphate + NADPH + H(+). The protein operates within amino-acid biosynthesis; L-proline biosynthesis; L-glutamate 5-semialdehyde from L-glutamate: step 2/2. In terms of biological role, catalyzes the NADPH-dependent reduction of L-glutamate 5-phosphate into L-glutamate 5-semialdehyde and phosphate. The product spontaneously undergoes cyclization to form 1-pyrroline-5-carboxylate. The protein is Gamma-glutamyl phosphate reductase of Vibrio vulnificus (strain CMCP6).